The primary structure comprises 264 residues: Outer kinetochore KNL1 complex subunit sos7 (264 aa).

Positions 90–236 (EAEDNEKLET…SNQIKAAIHT (147 aa)) form a coiled coil.

This sequence belongs to the KRE28 family. As to quaternary structure, component of the KNL1/SPC105 complex composed of at least spc7 and sos7. Part of the outer kinetochore KMN network that includes the KNL1, MIS12 and NDC80 complexes. Interacts (via C-terminus) with spc7 (via C-terminus); the interaction is direct.

Its subcellular location is the nucleus. The protein resides in the chromosome. It localises to the centromere. It is found in the kinetochore. Functionally, acts as a component of the outer kinetochore KNL1 complex that facilitates microtubule-kinetochore interactions and the spindle assembly checkpoint. Kinetochores, consisting of a centromere-associated inner segment and a microtubule-contacting outer segment, play a crucial role in chromosome segregation by mediating the physical connection between centromeric DNA and spindle microtubules. The outer kinetochore is made up of the ten-subunit KMN network, comprising the MIS12, NDC80 and KNL1 complexes, and auxiliary microtubule-associated components; together they connect the outer kinetochore with the inner kinetochore, bind microtubules, and mediate interactions with mitotic checkpoint proteins that delay anaphase until chromosomes are bioriented on the spindle. The protein is Outer kinetochore KNL1 complex subunit sos7 (sos7) of Schizosaccharomyces pombe (strain 972 / ATCC 24843) (Fission yeast).